The chain runs to 271 residues: TIP41-like protein (271 aa).

Lys106 bears the N6-acetyllysine mark. The interaction with PPP2CA stretch occupies residues 173–271 (RVMPSSFFLL…PVDSQSTPSE (99 aa)). Phosphoserine is present on residues Ser265 and Ser270.

The protein belongs to the TIP41 family. As to quaternary structure, interacts with PPP2CA. Interacts with PPP2CB, PPP4C and PPP6C. Interacts with IGBP1; the interaction is dependent on PPP2CA. Associates with a protein phosphatase 2A PP2A(C):IGBP1 complex. Interacts with PPP4C and PPP4R2.

It is found in the cytoplasm. Functionally, may be a allosteric regulator of serine/threonine-protein phosphatase 2A (PP2A). Inhibits catalytic activity of the PP2A(D) core complex in vitro. The PP2A(C):TIPRL complex does not show phosphatase activity. Acts as a negative regulator of serine/threonine-protein phosphatase 4 probably by inhibiting the formation of the active PPP4C:PPP4R2 complex; the function is proposed to implicate it in DNA damage response by promoting H2AX phosphorylated on Ser-140 (gamma-H2AX). May play a role in the regulation of ATM/ATR signaling pathway controlling DNA replication and repair. The chain is TIP41-like protein (Tiprl) from Mus musculus (Mouse).